The chain runs to 513 residues: Cytochrome P450 72A552 (513 aa).

A helical transmembrane segment spans residues 2–22 (EISVASVTVSVVIAVVTWWVW). A heme-binding site is contributed by C460.

It belongs to the cytochrome P450 family. The cofactor is heme.

It localises to the membrane. The enzyme catalyses oleanolate + reduced [NADPH--hemoprotein reductase] + O2 = hederagenin + oxidized [NADPH--hemoprotein reductase] + H2O + H(+). In terms of biological role, catalyzes the oxidation of oleanolate at the C-23 position to form hederagenin. This is Cytochrome P450 72A552 from Barbarea vulgaris (Yellow rocket).